The chain runs to 180 residues: Succinate dehydrogenase cytochrome B subunit, mitochondrial (180 aa).

Residues 1 to 82 (MFATRSFCLS…WYLSSLHRIT (82 aa)) lie on the Mitochondrial matrix side of the membrane. The helical transmembrane segment at 83-103 (GCVVAGTLYAFAMGYLVAPLA) threads the bilayer. Residues 104–122 (GYSLDTATISGLIQQVPTW) are Mitochondrial intermembrane-facing. A helical membrane pass occupies residues 123–143 (IKVPAKFVISYPLTFHIFNGI). Residue histidine 138 participates in heme binding. Residues 144–159 (RHLIWDTTKELSLKGV) lie on the Mitochondrial matrix side of the membrane. Residues 160–180 (YRTGYAVLALSVLTSGYFAMI) form a helical membrane-spanning segment.

This sequence belongs to the cytochrome b560 family. In terms of assembly, forms part of complex II containing four subunits: a 70 kDa flavoprotein (FP), a 27 kDa iron-sulfur protein (IP), a cytochrome B and a membrane-anchoring protein. The cofactor is heme.

It is found in the mitochondrion inner membrane. Its pathway is carbohydrate metabolism; tricarboxylic acid cycle. Functionally, membrane-anchoring subunit of succinate dehydrogenase (SDH) that is involved in complex II of the mitochondrial electron transport chain and is responsible for transferring electrons from succinate to ubiquinone (coenzyme Q). In Schizosaccharomyces pombe (strain 972 / ATCC 24843) (Fission yeast), this protein is Succinate dehydrogenase cytochrome B subunit, mitochondrial (sdh3).